Reading from the N-terminus, the 328-residue chain is 2,4-dinitroanisole O-demethylase subunit alpha (328 aa).

Residues 1–9 constitute a propeptide that is removed on maturation; that stretch reads MSVTSQTSS. Residues His101, His103, Asp105, His168, His225, and Cys247 each contribute to the Zn(2+) site.

Belongs to the metallo-beta-lactamase superfamily. Part of the complex DnhAB composed of the 2,4-dinitroanisole O-demethylase alpha (DnhA) and beta (DnhB) subunits. Zn(2+) is required as a cofactor.

The catalysed reaction is 2,4-dinitroanisole + H2O = 2,4-dinitrophenol + methanol + H(+). Functionally, involved in the degradation of 2,4-dinitroanisole (DNAN), an insensitive munition ingredient used in explosive formulations as a replacement for 2,4,6-trinitrotoluene (TNT). Catalyzes the removal of the methyl group from 2,4-dinitroanisole (DNAN) to yield 2,4-dinitrophenol (2,4-DNP) and methanol. The protein is 2,4-dinitroanisole O-demethylase subunit alpha of Nocardioides sp. (strain JS1661).